A 103-amino-acid polypeptide reads, in one-letter code: Nematocin (103 aa).

Residues 1 to 19 (MGSSPILLVLAISIGLASA) form the signal peptide. A disulfide bridge connects residues Cys20 and Cys25. Tyr30 carries the post-translational modification Tyrosine amide. A propeptide spanning residues 31–103 (GRTIRCSSCG…QGGCQTSAMC (73 aa)) is cleaved from the precursor.

It belongs to the vasopressin/oxytocin family. As to expression, detected in thermosensory AFD neurons, neurosecretory NSM cells, AVK interneurons, pharyngeal neuron M5, and the mechanosensory DVA neuron. Detected in male-specific CP motor neurons.

The protein localises to the secreted. Ligand for the G-protein coupled receptor ntr-1. Plays a role in gustatory associative learning. Also plays a role in male mating behavior. The chain is Nematocin from Caenorhabditis elegans.